We begin with the raw amino-acid sequence, 535 residues long: ABC1 family protein C10F6.14c (535 aa).

This sequence belongs to the protein kinase superfamily. ADCK protein kinase family.

The sequence is that of ABC1 family protein C10F6.14c from Schizosaccharomyces pombe (strain 972 / ATCC 24843) (Fission yeast).